The primary structure comprises 132 residues: Interleukin-13 (132 aa).

A signal peptide spans 1–18 (MALLLTTVIALTCLGGFA). Asn-38, Asn-49, Asn-57, and Asn-72 each carry an N-linked (GlcNAc...) asparagine glycan. Intrachain disulfides connect Cys-48–Cys-76 and Cys-64–Cys-90.

This sequence belongs to the IL-4/IL-13 family. In terms of assembly, interacts with IL13RA2.

The protein localises to the secreted. Its function is as follows. Cytokine that plays important roles in allergic inflammation and immune response to parasite infection. Synergizes with IL2 in regulating interferon-gamma synthesis. Stimulates B-cell proliferation, and activation of eosinophils, basophils, and mast cells. Plays an important role in controlling IL33 activity by modulating the production of transmembrane and soluble forms of interleukin-1 receptor-like 1/IL1RL1. Displays the capacity to antagonize Th1-driven proinflammatory immune response and downregulates synthesis of many proinflammatory cytokines including IL1, IL6, IL10, IL12 and TNF-alpha through a mechanism that partially involves suppression of NF-kappa-B. Also functions on nonhematopoietic cells, including endothelial cells where it induces vascular cell adhesion protein 1/VCAM1, which is important in the recruitment of eosinophils. Exerts its biological effects through its receptors which comprises the IL4R chain and the IL13RA1 chain, to activate JAK1 and TYK2, leading to the activation of STAT6. Aside from IL13RA1, another receptor IL13RA2 acts as a high affinity decoy for IL13 and mediates internalization and depletion of extracellular IL13. In Pan troglodytes (Chimpanzee), this protein is Interleukin-13 (IL13).